Consider the following 682-residue polypeptide: Nephrocystin-1-like protein (682 aa).

A coiled-coil region spans residues 10–100 (LQDAINRFPQ…ALSPEKEQLS (91 aa)). The tract at residues 96-188 (KEQLSFSVSV…PLESKTLNER (93 aa)) is disordered. The span at 128–148 (NDDESEDSDNDSEIIETDVQL) shows a compositional bias: acidic residues. The SH3 domain maps to 215–275 (VRGNVFVAID…PKTYLQHVKE (61 aa)).

Belongs to the nephrocystin-1 family. As to expression, expressed in ciliated sensory neurons of the head (amphid neurons) and the tail in hermaphrodites (phasmid neurons) and males (sensory ray neurons).

In terms of biological role, plays a role in the extension of dendrites from phasmid ciliated sensory neurons. May be necessary for initial assembly of the cilium. This is Nephrocystin-1-like protein from Caenorhabditis elegans.